The sequence spans 337 residues: Neurogenic differentiation factor 6 (337 aa).

The tract at residues 28–80 (QKQIKKPESFPKQVVLRGKSIKRAPGEETEKEEEEEDREEEDENGLSRRRGLR) is disordered. The segment covering 54–71 (EETEKEEEEEDREEEDEN) has biased composition (acidic residues). A Nuclear localization signal motif is present at residues 80 to 86 (RKKKTTK). The 53-residue stretch at 94 to 146 (FRRQEANARERNRMHGLNDALDNLRKVVPCYSKTQKLSKIETLRLAKNYIWAL) folds into the bHLH domain.

In terms of assembly, efficient DNA binding requires dimerization with another bHLH protein. As to expression, specific to the nervous system of both embryos and adults. Highest levels in the cortical plate of the cerebrum.

It is found in the nucleus. Its function is as follows. Activates E box-dependent transcription in collaboration with TCF3/E47. May be a trans-acting factor involved in the development and maintenance of the mammalian nervous system. Transactivates the promoter of its own gene. The protein is Neurogenic differentiation factor 6 (Neurod6) of Mus musculus (Mouse).